The sequence spans 237 residues: Nodulation protein NolA (237 aa).

One can recognise an HTH merR-type domain in the interval 10-79 (RWRIGELAGA…LQEIRRAMDG (70 aa)). The segment at residues 13–32 (IGELAGATGVTVRTLHHYEH) is a DNA-binding region (H-T-H motif).

Its function is as follows. Involved in genotype-specific nodulation of soybeans. This is Nodulation protein NolA (nolA) from Bradyrhizobium sp. (strain NC92).